The chain runs to 785 residues: Mitochondrial intermediate peptidase (785 aa).

A mitochondrion-targeting transit peptide spans 1–27 (MLKAVMPRPWVCSRCVKRQIQSSRGLA). Residues 26-52 (LATASTQYREPRPVPTDHSAPGAKHDD) form a disordered region. His-566 contributes to the Zn(2+) binding site. Glu-567 is a catalytic residue. Zn(2+)-binding residues include His-570 and His-573.

This sequence belongs to the peptidase M3 family. The cofactor is Zn(2+).

The protein resides in the mitochondrion matrix. It carries out the reaction Release of an N-terminal octapeptide as second stage of processing of some proteins imported into the mitochondrion.. Cleaves proteins, imported into the mitochondrion, to their mature size. While most mitochondrial precursor proteins are processed to the mature form in one step by mitochondrial processing peptidase (MPP), the sequential cleavage by MIP of an octapeptide after initial processing by MPP is a required step for a subgroup of nuclear-encoded precursor proteins destined for the matrix or the inner membrane. The sequence is that of Mitochondrial intermediate peptidase (oct1) from Sclerotinia sclerotiorum (strain ATCC 18683 / 1980 / Ss-1) (White mold).